We begin with the raw amino-acid sequence, 665 residues long: MTGFQIKAPFEPTGDQPRAIAQLTASLQAEHRFQTLLGATGTGKTHTIARVIEKIGKPTLVLAHNKTLAAQLCNELREFFPNNAVEYFISYYDYYQPEAYIPVTDTYIEKTAAINEEIDMLRHSATRSLFERKDVIVVASISCIYGLGIPSEYLNASVPLQVGIEVDQRQLLRDLTTIQYSRNDLDLGRGRFRVKGDVLEIGPAYEDRIVRVEFFGDEIDAIRYVDPVTGTTLQSLDNLRIYPARHFVTPQERLEIACADIAAELKDRLTELEAQNKLLEAQRLDQRTRYDLEMLREVGYCNGVENYSRHLAGRSPGEPPETLIDYFPKDWLLVVDESHVTVPQIRGMYNGDQSRKRVLIDHGFRLPSAADNRPLKSEEFWQKVTQCIFVSATPGDWELDISEDRIIEQIIRPTGVVDPEIFVRPTTGQVDDLLGEVRDRIERRERVLITTLTKRMAEDLTEYFQDRGVRVRYLHSEIGAIERIEILEDLRKGTFDVLIGVNLLREGLDLPEVSLVAILDADKEGFLRAERSLIQTIGRAARHVRGQAILYADNLTDSMAKAISETERRRAIQTAYNQKHGITPQPIVKKASNAILAFLEVSRRLNAQELDTAYEQADELPLEDIPELITQLEAQMKEAAKKLEFEEAAKYRDRIKQLRDKLLGR.

Residues 25–178 (ASLQAEHRFQ…RQLLRDLTTI (154 aa)) enclose the Helicase ATP-binding domain. Residue 38–45 (GATGTGKT) participates in ATP binding. The Beta-hairpin signature appears at 91–114 (YYDYYQPEAYIPVTDTYIEKTAAI). The Helicase C-terminal domain occupies 429-595 (QVDDLLGEVR…PIVKKASNAI (167 aa)). Residues 626 to 661 (PELITQLEAQMKEAAKKLEFEEAAKYRDRIKQLRDK) form the UVR domain.

It belongs to the UvrB family. As to quaternary structure, forms a heterotetramer with UvrA during the search for lesions. Interacts with UvrC in an incision complex.

The protein resides in the cytoplasm. Functionally, the UvrABC repair system catalyzes the recognition and processing of DNA lesions. A damage recognition complex composed of 2 UvrA and 2 UvrB subunits scans DNA for abnormalities. Upon binding of the UvrA(2)B(2) complex to a putative damaged site, the DNA wraps around one UvrB monomer. DNA wrap is dependent on ATP binding by UvrB and probably causes local melting of the DNA helix, facilitating insertion of UvrB beta-hairpin between the DNA strands. Then UvrB probes one DNA strand for the presence of a lesion. If a lesion is found the UvrA subunits dissociate and the UvrB-DNA preincision complex is formed. This complex is subsequently bound by UvrC and the second UvrB is released. If no lesion is found, the DNA wraps around the other UvrB subunit that will check the other stand for damage. In Cyanothece sp. (strain PCC 7425 / ATCC 29141), this protein is UvrABC system protein B.